Consider the following 318-residue polypeptide: Aquaporin-1 (318 aa).

The span at 1–16 (MVQFGSRANTNMTGLP) shows a compositional bias: polar residues. Residues 1-27 (MVQFGSRANTNMTGLPTEQAVEDRRVG) form a disordered region. Residues 1 to 36 (MVQFGSRANTNMTGLPTEQAVEDRRVGNPKRDRMRN) are Cytoplasmic-facing. A helical membrane pass occupies residues 37-57 (ALVIVLGEFCGTFMFLLLSFI). Over 58–77 (GAQTALVTNSPSDAGSPLLP) the chain is Extracellular. Residues 78-98 (FSLMYIAASFGTALAVNVWIF) form a helical membrane-spanning segment. Residues 99-108 (YRVSGGMFNP) are Cytoplasmic-facing. An NPA 1 motif is present at residues 107–109 (NPA). Residues 109–129 (AVTLGLVLVGAVTPIHALLII) traverse the membrane as a helical segment. The Extracellular portion of the chain corresponds to 130 to 165 (PTQLVAAITAAGITDALLPGKLLVTNALGNGTSVAQ). N-linked (GlcNAc...) asparagine glycosylation is present at N159. Residues 166 to 186 (GVFIEMFLTSQLVLTVYFLAV) form a helical membrane-spanning segment. Residues 187 to 193 (EKHRSTH) lie on the Cytoplasmic side of the membrane. The chain crosses the membrane as a helical span at residues 194 to 214 (LAPIGIGISVFIAHICATNWT). At 215 to 236 (GTSINPARSFGPSVVAGFHGYD) the chain is on the extracellular side. Residues 219 to 221 (NPA) carry the NPA 2 motif. A helical transmembrane segment spans residues 237 to 257 (WIYYIGPFMGSLLAFGCYKIF). The Cytoplasmic segment spans residues 258–318 (KVLEYQTANP…NDSVIDDQMV (61 aa)). The tract at residues 268–318 (GQDDDNLDRSGHHHFFGHRKEPMPHTHTDNIEPKDHGVPQRNDSVIDDQMV) is disordered. The span at 285–305 (HRKEPMPHTHTDNIEPKDHGV) shows a compositional bias: basic and acidic residues.

Belongs to the MIP/aquaporin (TC 1.A.8) family.

It localises to the nucleus membrane. It carries out the reaction H2O(in) = H2O(out). Probable water channel involved in responses to changes in environmental conditions and conidiation. Involved in responses to hyperosmotic conditions, oxidative stress and cell wall destabilization. Also required for proper transcriptional activation of genes involved in aurofusarin biosynthesis. Not involved in pathogenicity, but negatively regulates deoxynivalenol (DON) production. This Gibberella zeae (strain ATCC MYA-4620 / CBS 123657 / FGSC 9075 / NRRL 31084 / PH-1) (Wheat head blight fungus) protein is Aquaporin-1.